A 175-amino-acid chain; its full sequence is NADH-ubiquinone oxidoreductase chain 6 (175 aa).

The next 5 helical transmembrane spans lie at 1 to 21 (MTMY…VGFS), 25 to 45 (SPIY…GIVL), 47 to 67 (FGGS…MLVV), 88 to 108 (TVFG…YYAL), and 149 to 169 (YGTW…VVIM).

This sequence belongs to the complex I subunit 6 family. In terms of assembly, core subunit of respiratory chain NADH dehydrogenase (Complex I) which is composed of 45 different subunits.

The protein localises to the mitochondrion inner membrane. The enzyme catalyses a ubiquinone + NADH + 5 H(+)(in) = a ubiquinol + NAD(+) + 4 H(+)(out). In terms of biological role, core subunit of the mitochondrial membrane respiratory chain NADH dehydrogenase (Complex I) which catalyzes electron transfer from NADH through the respiratory chain, using ubiquinone as an electron acceptor. Essential for the catalytic activity and assembly of complex I. This Sus scrofa (Pig) protein is NADH-ubiquinone oxidoreductase chain 6 (MT-ND6).